The following is a 239-amino-acid chain: Succinate dehydrogenase [ubiquinone] iron-sulfur subunit (239 aa).

In terms of domain architecture, 2Fe-2S ferredoxin-type spans 11 to 100; the sequence is FKVYRWNPDK…EMKIYPLPHM (90 aa). [2Fe-2S] cluster is bound by residues Cys-61, Cys-66, Cys-69, and Cys-81. Positions 141–171 constitute a 4Fe-4S ferredoxin-type domain; that stretch reads DREKLDGLYECVLCACCSTSCPSYWWNSDKY. [4Fe-4S] cluster is bound by residues Cys-151, Cys-154, and Cys-157. Cys-161 lines the [3Fe-4S] cluster pocket. Trp-166 is an a ubiquinone binding site. Cys-208 and Cys-214 together coordinate [3Fe-4S] cluster. Residue Cys-218 participates in [4Fe-4S] cluster binding.

Belongs to the succinate dehydrogenase/fumarate reductase iron-sulfur protein family. As to quaternary structure, component of complex II composed of four subunits: a flavoprotein (FP), an iron-sulfur protein (IP), and a cytochrome b composed of a large and a small subunit. Requires [2Fe-2S] cluster as cofactor. The cofactor is [3Fe-4S] cluster. It depends on [4Fe-4S] cluster as a cofactor.

Its subcellular location is the mitochondrion inner membrane. The catalysed reaction is a quinone + succinate = fumarate + a quinol. The protein operates within carbohydrate metabolism; tricarboxylic acid cycle; fumarate from succinate (eukaryal route): step 1/1. Functionally, iron-sulfur protein (IP) subunit of succinate dehydrogenase (SDH) that is involved in complex II of the mitochondrial electron transport chain and is responsible for transferring electrons from succinate to ubiquinone (coenzyme Q). This is Succinate dehydrogenase [ubiquinone] iron-sulfur subunit (SDH2) from Reclinomonas americana.